Consider the following 412-residue polypeptide: Putative competence-damage inducible protein (412 aa).

It belongs to the CinA family.

This chain is Putative competence-damage inducible protein, found in Bacillus cereus (strain ATCC 14579 / DSM 31 / CCUG 7414 / JCM 2152 / NBRC 15305 / NCIMB 9373 / NCTC 2599 / NRRL B-3711).